Reading from the N-terminus, the 100-residue chain is Small ribosomal subunit protein bS20 (100 aa).

Residues 79 to 100 (AAHQKSRLSAAVKQAIEPAPST) are disordered.

Belongs to the bacterial ribosomal protein bS20 family.

Binds directly to 16S ribosomal RNA. In Prochlorococcus marinus (strain MIT 9303), this protein is Small ribosomal subunit protein bS20.